We begin with the raw amino-acid sequence, 505 residues long: Glycerol kinase (505 aa).

T14 is an ADP binding site. ATP-binding residues include T14, T15, and S16. T14 serves as a coordination point for sn-glycerol 3-phosphate. Residue R18 coordinates ADP. Sn-glycerol 3-phosphate-binding residues include R84, E85, Y136, and D246. The glycerol site is built by R84, E85, Y136, D246, and Q247. Residues T268 and G311 each contribute to the ADP site. 4 residues coordinate ATP: T268, G311, Q315, and G412. ADP contacts are provided by G412 and N416.

It belongs to the FGGY kinase family.

It carries out the reaction glycerol + ATP = sn-glycerol 3-phosphate + ADP + H(+). It functions in the pathway polyol metabolism; glycerol degradation via glycerol kinase pathway; sn-glycerol 3-phosphate from glycerol: step 1/1. Its activity is regulated as follows. Inhibited by fructose 1,6-bisphosphate (FBP). Key enzyme in the regulation of glycerol uptake and metabolism. Catalyzes the phosphorylation of glycerol to yield sn-glycerol 3-phosphate. The chain is Glycerol kinase from Vibrio vulnificus (strain CMCP6).